A 228-amino-acid polypeptide reads, in one-letter code: Thermonuclease (228 aa).

The N-terminal stretch at 1–23 (MTEYLLSAGICMAIVSILLIGMA) is a signal peptide. Positions 24 to 60 (ISNVSKEQYAKRFFFFATSCLVLTLVVASSLSSSANA) are excised as a propeptide. D100 serves as a coordination point for Ca(2+). R114 is a catalytic residue. 2 residues coordinate Ca(2+): D119 and T120. Residues E122 and R166 contribute to the active site.

This sequence belongs to the thermonuclease family. The cofactor is Ca(2+).

The protein resides in the secreted. It catalyses the reaction Endonucleolytic cleavage to nucleoside 3'-phosphates and 3'-phosphooligonucleotide end-products.. Functionally, enzyme that catalyzes the hydrolysis of both DNA and RNA at the 5' position of the phosphodiester bond. This chain is Thermonuclease (nuc), found in Staphylococcus aureus (strain MRSA252).